The sequence spans 146 residues: Ribosome maturation factor RimP (146 aa).

The protein belongs to the RimP family.

The protein localises to the cytoplasm. Functionally, required for maturation of 30S ribosomal subunits. The protein is Ribosome maturation factor RimP of Helicobacter pylori (strain Shi470).